A 1038-amino-acid chain; its full sequence is Type I restriction enzyme EcoR124I/EcoR124II endonuclease subunit (1038 aa).

The segment at 31–249 is nuclease domain; that stretch reads QSESDLEREL…LKDFTATCFQ (219 aa). The interval 250–469 is motor 1 domain; that stretch reads KHTLLNVLVN…SYVITDAIRD (220 aa). One can recognise a Helicase ATP-binding domain in the interval 294 to 439; sequence KNWSKPESGG…YQFGFTGTPI (146 aa). 307-314 lines the ATP pocket; the sequence is HTTGSGKT. The DEAH box motif lies at 408 to 411; it reads DECH. Residues 470–702 form a motor 2 domain region; sequence EKVLKFKVDY…YDATKTFGNI (233 aa). The tract at residues 720–732 is motor 2-helicase linker; it reads GDKNTKNVVLEKS. The helicase domain stretch occupies residues 732-860; the sequence is SYTEYMEGFT…NDIRDWQRRE (129 aa). Positions 859 to 886 are helicase-CTD linker; the sequence is REKEAEKKEKSTTDWDDVVFEVDLLKSQ. The C-terminal domain stretch occupies residues 886 to 1038; it reads QEINLDYILG…EKFKGVGGKI (153 aa).

The protein belongs to the HsdR family. In terms of assembly, a monomer in solution. The type I restriction/modification system is composed of three polypeptides R, M and S; the restriction enzyme has stoichiometry R(2)M(2)S(1) while the methyltransferase is M(2)S(1). There is an equilibrium between R(2)M(2)S(1) and R(1)M(2)S(1); the latter is methylation and translocation proficient but restriction deficient. As to quaternary structure, (Microbial infection) Holoenenzyme interacts with Escherichia phage T7 protein Ocr; this interaction leads to the inhibition of the restriction activity, but may still allow methylation and translocation.

It catalyses the reaction Endonucleolytic cleavage of DNA to give random double-stranded fragments with terminal 5'-phosphates, ATP is simultaneously hydrolyzed.. The restriction (R) subunit of a type I restriction enzyme that recognizes 5'-GAAN(6)RTCG-3' (for EcoR124I) and 5'-GAAN(7)RTCG-3' (for EcoR124II) and cleaves a random distance away. Subunit R is required for both nuclease and ATPase activities, but not for modification. After locating an unmethylated recognition site, the enzyme complex serves as a molecular motor that translocates DNA in an ATP-dependent manner until a collision occurs that triggers cleavage. The enzyme undergoes major structural changes to bring the motor domains into contact with DNA, allowing DNA translocation. This prevents DNA access to the catalytic domains of both the R and M subunits, preventing both restriction and methylation. The R(1)M(2)S(1) complex translocates an average of 555 bp/second on nicked DNA; the R(2)M(2)S(1) complex translocates at double that speed. The 2 R subunit motors are independent and track along the helical pitch of the DNA, inducing positive supercoiling ahead of themselves. The polypeptide is Type I restriction enzyme EcoR124I/EcoR124II endonuclease subunit (Escherichia coli).